The following is a 238-amino-acid chain: 1-(5-phosphoribosyl)-5-[(5-phosphoribosylamino)methylideneamino] imidazole-4-carboxamide isomerase (238 aa).

Asp-8 (proton acceptor) is an active-site residue. The active-site Proton donor is the Asp-129.

This sequence belongs to the HisA/HisF family.

It localises to the cytoplasm. The catalysed reaction is 1-(5-phospho-beta-D-ribosyl)-5-[(5-phospho-beta-D-ribosylamino)methylideneamino]imidazole-4-carboxamide = 5-[(5-phospho-1-deoxy-D-ribulos-1-ylimino)methylamino]-1-(5-phospho-beta-D-ribosyl)imidazole-4-carboxamide. It participates in amino-acid biosynthesis; L-histidine biosynthesis; L-histidine from 5-phospho-alpha-D-ribose 1-diphosphate: step 4/9. The polypeptide is 1-(5-phosphoribosyl)-5-[(5-phosphoribosylamino)methylideneamino] imidazole-4-carboxamide isomerase (Lacticaseibacillus paracasei (strain ATCC 334 / BCRC 17002 / CCUG 31169 / CIP 107868 / KCTC 3260 / NRRL B-441) (Lactobacillus paracasei)).